The primary structure comprises 513 residues: EGF-like domain-containing protein 1 (513 aa).

The first 21 residues, 1–21, serve as a signal peptide directing secretion; the sequence is MMHTFLRRLCVVALCLGYIKA. The 37-residue stretch at 72 to 108 folds into the EGF-like domain; the sequence is PTALCGPPCLNGGECYEPTVGTYMCMCPEAFYGNKCE. 3 disulfide bridges follow: Cys76-Cys86, Cys80-Cys96, and Cys98-Cys107. The ZP domain maps to 115-364; it reads ECSGTEITIN…TSCDSVVCPS (250 aa). Positions 356-411 are disordered; the sequence is SCDSVVCPSPPQSVPSNPQNIPPANPQNIPPANPQNIPPANPQISPSSSQRKRRAA. A compositionally biased stretch (pro residues) spans 375–396; that stretch reads NIPPANPQNIPPANPQNIPPAN. N-linked (GlcNAc...) asparagine glycans are attached at residues Asn438 and Asn503.

Component of the acid-insoluble organic matrix of calcified layers of the shell (at protein level).

The protein resides in the secreted. The chain is EGF-like domain-containing protein 1 from Lottia gigantea (Giant owl limpet).